The sequence spans 507 residues: ATP synthase subunit alpha, chloroplastic (507 aa).

Residue 170–177 (GDRQTGKT) coordinates ATP.

It belongs to the ATPase alpha/beta chains family. F-type ATPases have 2 components, CF(1) - the catalytic core - and CF(0) - the membrane proton channel. CF(1) has five subunits: alpha(3), beta(3), gamma(1), delta(1), epsilon(1). CF(0) has four main subunits: a, b, b' and c.

Its subcellular location is the plastid. The protein resides in the chloroplast thylakoid membrane. The enzyme catalyses ATP + H2O + 4 H(+)(in) = ADP + phosphate + 5 H(+)(out). Produces ATP from ADP in the presence of a proton gradient across the membrane. The alpha chain is a regulatory subunit. The polypeptide is ATP synthase subunit alpha, chloroplastic (Ipomoea purpurea (Common morning glory)).